The chain runs to 139 residues: Endoribonuclease YbeY (139 aa).

Zn(2+) is bound by residues His99, His103, and His109.

Belongs to the endoribonuclease YbeY family. Zn(2+) serves as cofactor.

The protein resides in the cytoplasm. In terms of biological role, single strand-specific metallo-endoribonuclease involved in late-stage 70S ribosome quality control and in maturation of the 3' terminus of the 16S rRNA. The protein is Endoribonuclease YbeY of Nautilia profundicola (strain ATCC BAA-1463 / DSM 18972 / AmH).